The sequence spans 332 residues: Torsin-1A (332 aa).

A signal peptide spans 1-20 (MKLGRAALGLLLLAPSVVQA). Residues 91-251 (KPKKPLTLSL…VSVFNNKNSG (161 aa)) are interaction with SNAPIN. Residue 102-109 (GWTGTGKN) participates in ATP binding. Residues Asn143 and Asn158 are each glycosylated (N-linked (GlcNAc...) asparagine). Positions 251–332 (GFWHSSLIDR…FTKLDYYYDD (82 aa)) are interaction with KLC1. The interaction with SYNE3 stretch occupies residues 312 to 332 (RVFSDKGCKTVFTKLDYYYDD).

It belongs to the ClpA/ClpB family. Torsin subfamily. In terms of assembly, homohexamer. Interacts with TOR1B; the interaction may be specific of neural tissues. Interacts (ATP-bound) with TOR1AIP1 and TOR1AIP2; the interactions induce ATPase activity. Interacts with KLHL14; preferentially when ATP-free. Interacts with KLC1 (via TPR repeats); the interaction associates TOR1A with the kinesin oligomeric complex. Interacts with COPS4; the interaction associates TOR1A with the CSN complex. Interacts with SNAPIN; the interaction is direct and associates SNAPIN with the CSN complex. Interacts with STON2. Interacts (ATP-bound) with SYNE3 (via KASH domain); the interaction is required for SYNE3 nuclear envelope localization. Interacts with VIM; the interaction associates TOR1A with the cytoskeleton. Interacts with PLEC. Interacts (ATP-bound) with SLC6A3; regulates SLC6A3 transport to the plasma membrane. Post-translationally, N-glycosylated.

The protein localises to the endoplasmic reticulum lumen. It localises to the nucleus membrane. It is found in the cell projection. Its subcellular location is the growth cone. The protein resides in the cytoplasmic vesicle membrane. The protein localises to the cytoplasmic vesicle. It localises to the secretory vesicle. It is found in the synaptic vesicle. Its subcellular location is the cytoplasm. The protein resides in the cytoskeleton. The catalysed reaction is ATP + H2O = ADP + phosphate + H(+). Protein with chaperone functions important for the control of protein folding, processing, stability and localization as well as for the reduction of misfolded protein aggregates. Involved in the regulation of synaptic vesicle recycling, controls STON2 protein stability in collaboration with the COP9 signalosome complex (CSN). In the nucleus, may link the cytoskeleton with the nuclear envelope, this mechanism seems to be crucial for the control of nuclear polarity, cell movement and, specifically in neurons, nuclear envelope integrity. Participates in the cellular trafficking and may regulate the subcellular location of multipass membrane proteins such as the dopamine transporter SLC6A3, leading to the modulation of dopamine neurotransmission. In the endoplasmic reticulum, plays a role in the quality control of protein folding by increasing clearance of misfolded proteins such as SGCE variants or holding them in an intermediate state for proper refolding. May have a redundant function with TOR1B in non-neural tissues. In Macaca fascicularis (Crab-eating macaque), this protein is Torsin-1A (TOR1A).